The following is a 239-amino-acid chain: Protein TIPIN homolog (239 aa).

Acidic residues-rich tracts occupy residues 1-14 (MDEM…DELD) and 156-166 (DGADDDEDDLF). 2 disordered regions span residues 1–38 (MDEM…RRII) and 135–239 (ESTD…NNDW). 2 stretches are compositionally biased toward basic and acidic residues: residues 169–193 (LPEK…EKKN) and 206–223 (YRMM…AREA). The segment covering 224 to 239 (EAEDELMEDFDLNNDW) has biased composition (acidic residues).

The protein belongs to the CSM3 family.

The protein localises to the cytoplasm. The protein resides in the nucleus. Its function is as follows. Required for normal progression of S-phase. Important for cell survival after DNA damage or replication stress. In Caenorhabditis briggsae, this protein is Protein TIPIN homolog.